The sequence spans 117 residues: Immunoglobulin heavy variable 1-69D (117 aa).

Residues Met-1–Ser-19 form the signal peptide. Position 20 is a pyrrolidone carboxylic acid (Gln-20). Positions Gln-20 to Ser-44 are framework-1. The Ig-like domain occupies Gln-20–Arg-117. Cys-41 and Cys-115 are disulfide-bonded. A complementarity-determining-1 region spans residues Gly-45–Ala-52. Residues Ile-53–Gly-69 form a framework-2 region. A complementarity-determining-2 region spans residues Ile-70 to Ala-77. The framework-3 stretch occupies residues Asn-78 to Cys-115. Residues Ala-116–Arg-117 are complementarity-determining-3.

Immunoglobulins are composed of two identical heavy chains and two identical light chains; disulfide-linked.

The protein localises to the secreted. Its subcellular location is the cell membrane. Its function is as follows. V region of the variable domain of immunoglobulin heavy chains that participates in the antigen recognition. Immunoglobulins, also known as antibodies, are membrane-bound or secreted glycoproteins produced by B lymphocytes. In the recognition phase of humoral immunity, the membrane-bound immunoglobulins serve as receptors which, upon binding of a specific antigen, trigger the clonal expansion and differentiation of B lymphocytes into immunoglobulins-secreting plasma cells. Secreted immunoglobulins mediate the effector phase of humoral immunity, which results in the elimination of bound antigens. The antigen binding site is formed by the variable domain of one heavy chain, together with that of its associated light chain. Thus, each immunoglobulin has two antigen binding sites with remarkable affinity for a particular antigen. The variable domains are assembled by a process called V-(D)-J rearrangement and can then be subjected to somatic hypermutations which, after exposure to antigen and selection, allow affinity maturation for a particular antigen. In Homo sapiens (Human), this protein is Immunoglobulin heavy variable 1-69D.